We begin with the raw amino-acid sequence, 154 residues long: Ubiquitin-like protein 4A-A (154 aa).

A Ubiquitin-like domain is found at 1–76; it reads MILTVKPLQG…LNLVVRPAGE (76 aa).

As to quaternary structure, component of the BAT3 complex.

It localises to the cytoplasm. The protein resides in the cytosol. In terms of biological role, component of the BAT3 complex, a multiprotein complex involved in the post-translational delivery of tail-anchored (TA) membrane proteins to the endoplasmic reticulum membrane. TA membrane proteins, also named type II transmembrane proteins, contain a single C-terminal transmembrane region. The polypeptide is Ubiquitin-like protein 4A-A (ubl4aa) (Salmo salar (Atlantic salmon)).